A 458-amino-acid polypeptide reads, in one-letter code: Argininosuccinate lyase (458 aa).

The protein belongs to the lyase 1 family. Argininosuccinate lyase subfamily.

The protein localises to the cytoplasm. The catalysed reaction is 2-(N(omega)-L-arginino)succinate = fumarate + L-arginine. It functions in the pathway amino-acid biosynthesis; L-arginine biosynthesis; L-arginine from L-ornithine and carbamoyl phosphate: step 3/3. This chain is Argininosuccinate lyase, found in Pelobacter propionicus (strain DSM 2379 / NBRC 103807 / OttBd1).